A 237-amino-acid chain; its full sequence is uncharacterized protein (237 aa).

Residues 3–116 enclose the Response regulatory domain; it reads SALLIDDERF…RLAKTVQRLL (114 aa). Position 54 is a 4-aspartylphosphate (Asp-54). Positions 135–236 constitute an HTH LytTR-type domain; sequence IPCTGLNRIV…LKELKEMLGF (102 aa).

This is an uncharacterized protein from Vibrio cholerae serotype O1 (strain ATCC 39315 / El Tor Inaba N16961).